Consider the following 325-residue polypeptide: Fe-S cluster assembly protein DRE2 (325 aa).

Residues 1–169 (MTLGDRLGLI…KKKDAGNNEQ (169 aa)) are N-terminal SAM-like domain. The interval 170 to 222 (VVKLSVEDVEDDLDDDPEVSNELLSKAKFFNSLSLNQDAEIDENNLIKSTDGD) is linker. [2Fe-2S] cluster contacts are provided by C229, C240, C243, and C245. The fe-S binding site A stretch occupies residues 229-245 (CGKTNTKKRRACKDCTC). [4Fe-4S] cluster is bound by residues C288, C291, C299, and C302. Short sequence motifs (cx2C motif) lie at residues 288–291 (CGSC) and 299–302 (CSGC). Residues 288–302 (CGSCSLGDAFRCSGC) form a fe-S binding site B region.

This sequence belongs to the anamorsin family. Monomer. Interacts with TAH18. Interacts with MIA40. The cofactor is [2Fe-2S] cluster. [4Fe-4S] cluster serves as cofactor.

It is found in the cytoplasm. Its subcellular location is the mitochondrion intermembrane space. In terms of biological role, component of the cytosolic iron-sulfur (Fe-S) protein assembly (CIA) machinery required for the maturation of extramitochondrial Fe-S proteins. Part of an electron transfer chain functioning in an early step of cytosolic Fe-S biogenesis, facilitating the de novo assembly of a [4Fe-4S] cluster on the scaffold complex CFD1-NBP35. Electrons are transferred to DRE2 from NADPH via the FAD- and FMN-containing protein TAH18. TAH18-DRE2 are also required for the assembly of the diferric tyrosyl radical cofactor of ribonucleotide reductase (RNR), probably by providing electrons for reduction during radical cofactor maturation in the catalytic small subunit RNR2. The sequence is that of Fe-S cluster assembly protein DRE2 from Vanderwaltozyma polyspora (strain ATCC 22028 / DSM 70294 / BCRC 21397 / CBS 2163 / NBRC 10782 / NRRL Y-8283 / UCD 57-17) (Kluyveromyces polysporus).